Consider the following 264-residue polypeptide: Spermidine/putrescine transport system permease protein PotC (264 aa).

Helical transmembrane passes span 10–30 (FMTAIYAYLYIPIIILIVNSF), 66–86 (MAVFSATFATLIGSLTAVALY), 109–129 (IVMAISLLVLFMLLGIQLGFW), 131–151 (LLFSHITFCLPFVVVTVYSRL), 176–196 (IILPLAMPAVAAGWVLSFTLS), and 232–252 (ALATILLVLSLVMVIASQLIA). Residues 60-248 (AQHSLTMAVF…VLSLVMVIAS (189 aa)) enclose the ABC transmembrane type-1 domain.

It belongs to the binding-protein-dependent transport system permease family. CysTW subfamily.

The protein resides in the cell inner membrane. Functionally, required for the activity of the bacterial periplasmic transport system of putrescine and spermidine. This Shigella flexneri protein is Spermidine/putrescine transport system permease protein PotC (potC).